The chain runs to 131 residues: Phosphomevalonate dehydratase small subunit (131 aa).

S62 acts as the Proton acceptor in catalysis.

Belongs to the AcnX type II small subunit family. In terms of assembly, heterodimer composed of a large subunit (PMDh-L) and a small subunit (PMDh-S).

It carries out the reaction (R)-5-phosphomevalonate = (2E)-3-methyl-5-phosphooxypent-2-enoate + H2O. Its pathway is isoprenoid biosynthesis; isopentenyl diphosphate biosynthesis via mevalonate pathway. Component of a hydro-lyase that catalyzes the dehydration of mevalonate 5-phosphate (MVA5P) to form trans-anhydromevalonate 5-phosphate (tAHMP). Involved in the archaeal mevalonate (MVA) pathway, which provides fundamental precursors for isoprenoid biosynthesis, such as isopentenyl diphosphate (IPP) and dimethylallyl diphosphate (DMAPP). This is Phosphomevalonate dehydratase small subunit from Methanothermobacter thermautotrophicus (strain ATCC 29096 / DSM 1053 / JCM 10044 / NBRC 100330 / Delta H) (Methanobacterium thermoautotrophicum).